We begin with the raw amino-acid sequence, 150 residues long: MKYQQLENLESGWKWKYLVKKHREGELITRYVEASAAQEAVNLLLALENEPVRVNVWIDRHMNPALLNRMKQTIRARRKRHFNAEHQHTRKKSIDLEFMVWQRLAGLAQRRGKTLSETIVQLIEDAEHKEKYATQMTTLKQDLQALLGKK.

Belongs to the MatP family. In terms of assembly, homodimer.

It is found in the cytoplasm. Required for spatial organization of the terminus region of the chromosome (Ter macrodomain) during the cell cycle. Prevents early segregation of duplicated Ter macrodomains during cell division. Binds specifically to matS, which is a 13 bp signature motif repeated within the Ter macrodomain. This chain is Macrodomain Ter protein, found in Salmonella agona (strain SL483).